The primary structure comprises 229 residues: Triosephosphate isomerase (229 aa).

A substrate-binding site is contributed by 9-11; sequence NYK. Histidine 93 functions as the Electrophile in the catalytic mechanism. The active-site Proton acceptor is the glutamate 141. Substrate contacts are provided by residues isoleucine 146, glycine 180, and 201 to 202; that span reads AS.

It belongs to the triosephosphate isomerase family. As to quaternary structure, homotetramer; dimer of dimers.

The protein resides in the cytoplasm. It catalyses the reaction D-glyceraldehyde 3-phosphate = dihydroxyacetone phosphate. Its pathway is carbohydrate biosynthesis; gluconeogenesis. The protein operates within carbohydrate degradation; glycolysis; D-glyceraldehyde 3-phosphate from glycerone phosphate: step 1/1. Involved in the gluconeogenesis. Catalyzes stereospecifically the conversion of dihydroxyacetone phosphate (DHAP) to D-glyceraldehyde-3-phosphate (G3P). The chain is Triosephosphate isomerase from Sulfurisphaera tokodaii (strain DSM 16993 / JCM 10545 / NBRC 100140 / 7) (Sulfolobus tokodaii).